The following is a 942-amino-acid chain: Alpha,alpha-trehalose-phosphate synthase [UDP-forming] 1 (942 aa).

A disordered region spans residues 28-57 (REKRKSNRARNPNDVAGSSENSENDLRLEG). Positions 92 to 559 (QRLLVVANRL…AETFVSELND (468 aa)) are glycosyltransferase. The segment at 815 to 892 (DMPAIARSRP…LGNSRRPSPE (78 aa)) is disordered. 2 stretches are compositionally biased toward low complexity: residues 821–833 (RSRP…AKSS) and 841–867 (SKST…NKSS). The span at 879 to 888 (SNHSLGNSRR) shows a compositional bias: polar residues.

The protein in the N-terminal section; belongs to the glycosyltransferase 20 family. In the C-terminal section; belongs to the trehalose phosphatase family. In terms of tissue distribution, expressed in seedlings, leaves, roots, stems, flowers and siliques.

It is found in the vacuole. The protein resides in the secreted. The protein localises to the cell wall. It localises to the cytoplasm. The catalysed reaction is D-glucose 6-phosphate + UDP-alpha-D-glucose = alpha,alpha-trehalose 6-phosphate + UDP + H(+). In terms of biological role, required for normal embryo development, vegetative growth and transition to flowering. Regulates embryo growth, cell wall deposition, starch and sucrose degradation, but not cell differentiation. Involved in the regulation of glucose sensing and signaling genes during plant development. In Arabidopsis thaliana (Mouse-ear cress), this protein is Alpha,alpha-trehalose-phosphate synthase [UDP-forming] 1.